The primary structure comprises 154 residues: 6,7-dimethyl-8-ribityllumazine synthase (154 aa).

5-amino-6-(D-ribitylamino)uracil-binding positions include F22, 57–59 (VCE), and 81–83 (TVI). Residue 86–87 (KT) coordinates (2S)-2-hydroxy-3-oxobutyl phosphate. H89 serves as the catalytic Proton donor. V114 is a 5-amino-6-(D-ribitylamino)uracil binding site. R128 is a binding site for (2S)-2-hydroxy-3-oxobutyl phosphate.

It belongs to the DMRL synthase family. Forms an icosahedral capsid composed of 60 subunits, arranged as a dodecamer of pentamers.

The catalysed reaction is (2S)-2-hydroxy-3-oxobutyl phosphate + 5-amino-6-(D-ribitylamino)uracil = 6,7-dimethyl-8-(1-D-ribityl)lumazine + phosphate + 2 H2O + H(+). It participates in cofactor biosynthesis; riboflavin biosynthesis; riboflavin from 2-hydroxy-3-oxobutyl phosphate and 5-amino-6-(D-ribitylamino)uracil: step 1/2. In terms of biological role, catalyzes the formation of 6,7-dimethyl-8-ribityllumazine by condensation of 5-amino-6-(D-ribitylamino)uracil with 3,4-dihydroxy-2-butanone 4-phosphate. This is the penultimate step in the biosynthesis of riboflavin. The polypeptide is 6,7-dimethyl-8-ribityllumazine synthase (Wigglesworthia glossinidia brevipalpis).